The sequence spans 269 residues: Putative esterase/lipase 1 (269 aa).

The active site involves histidine 27. Serine 94 functions as the Charge relay system in the catalytic mechanism.

It belongs to the lipase/esterase LIP3/BchO family.

This Mycoplasma pneumoniae (strain ATCC 29342 / M129 / Subtype 1) (Mycoplasmoides pneumoniae) protein is Putative esterase/lipase 1.